Consider the following 345-residue polypeptide: Delta(6)-protoilludene synthase (345 aa).

Mg(2+) contacts are provided by aspartate 84, asparagine 220, serine 224, and glutamate 228. Residues 84–88 (DEYSD) carry the DDXXD motif motif. The (2E,6E)-farnesyl diphosphate site is built by arginine 309 and tyrosine 310.

Belongs to the terpene synthase family. In terms of assembly, monomer. Mg(2+) serves as cofactor.

The enzyme catalyses (2E,6E)-farnesyl diphosphate = Delta(6)-protoilludene + diphosphate. It participates in secondary metabolite biosynthesis. Delta(6)-protoilludene synthase, part of the gene cluster that mediates the biosynthesis of melleolides, a range of antifungal and phytotoxic polyketide derivatives composed of an orsellinic acid (OA) moiety esterified to various sesquiterpene alcohols. The first step in melleolides biosynthesis is performed by the delta(6)-protoilludene synthase PRO1 which catalyzes the cyclization of farnesyl diphosphate to protoilludene. The orsellinic acid synthase armB produces OA by condensing acetyl-CoA with 3 malonyl-CoA units in a three-round chain elongation reaction folowed by a C2-C7 ring closure. ArmB further catalyzes the trans-esterification of OA to the various sesquiterpene alcohols resulting from the hydroxylation of protoilludene. The melleolides cluster also includes 5 cytochrome P450 monooxygenases, 4 NAD(+)-dependent oxidoreductases, one flavin-dependent oxidoreductase, and one O-methyltransferase. The cytochrome P450 monooxygenases may be involved in protoilludene hydroxylation to elaborate melleolides with multiple alcohol groups, such as melleolide D, which carries alcohol functionalities at C-4, C-5, C-10, and C-13. The role of the NAD(+)-dependent enzymes remains unknown. Numerous melleolides, including arnamial, show 5'-O-methylation of the aromatic moiety which may be catalyzed by the methyltransferase encoded in the cluster. The flavin-dependent oxidoreductase might represent the dehydrogenase yielding the aldehyde in position 1 of arnamial and other melleolides. Finally, several halogenases, localized outside of the cluster, are able to catalyze the transfer of a single chlorine atom to the melleolide backbone, resulting in a 6'-chloromelleolide product. The chain is Delta(6)-protoilludene synthase from Armillaria gallica (Bulbous honey fungus).